A 201-amino-acid chain; its full sequence is Lipopolysaccharide core heptose(II)-phosphate phosphatase (201 aa).

An N-terminal signal peptide occupies residues 1-35 (MLAFTLRFIKNKRYLATLAGALVIIAGLTSQHAWS).

The protein belongs to the phosphoglycerate mutase family. Ais subfamily.

It localises to the periplasm. The protein operates within bacterial outer membrane biogenesis; lipopolysaccharide metabolism. Functionally, catalyzes the dephosphorylation of heptose(II) of the outer membrane lipopolysaccharide core. This is Lipopolysaccharide core heptose(II)-phosphate phosphatase from Salmonella choleraesuis (strain SC-B67).